The primary structure comprises 604 residues: Integrin alpha-IIb (604 aa).

The FG-GAP repeat unit spans residues 1 to 61 (QVLDSPFPTG…ASVQLLVQDS (61 aa)). The Extracellular segment spans residues 1–558 (QVLDSPFPTG…TQLLRALEER (558 aa)). Ca(2+) contacts are provided by D22, D24, N26, Y28, and D30. 2 disulfides stabilise this stretch: C69–C80 and C86–C141. N166 carries N-linked (GlcNAc...) asparagine glycosylation. Disulfide bonds link C198–C204, C270–C283, C422–C486, and C476–C481. Residue N276 is glycosylated (N-linked (GlcNAc...) asparagine). A glycan (N-linked (GlcNAc...) asparagine) is linked at N527. Residues 559–584 (AIPIWWVLVGVLGGLLLLTILVLAMW) form a helical membrane-spanning segment. The Cytoplasmic segment spans residues 585 to 604 (KVGFFKRNRPPLEEDDEEGE). The GFFKR motif motif lies at 587–591 (GFFKR).

It belongs to the integrin alpha chain family. As to quaternary structure, heterodimer of an alpha and a beta subunit. The alpha subunit is composed of a heavy and a light chain linked by a disulfide bond. Alpha-IIb associates with beta-3. Directly interacts with RNF181. Interacts (via C-terminus cytoplasmic tail region) with CIB1; the interaction is direct and calcium-dependent. Interacts (via C-terminus cytoplasmic tail region) with CIB2, CIB3 and CIB4; the interactions are stabilized/increased in a calcium and magnesium-dependent manner. ITGA2B:ITGB3 interacts with PPIA/CYPA; the interaction is ROS and PPIase activity-dependent and is increased in the presence of thrombin. ITGA2B:ITGB3 interacts with SELP (via C-type lectin domain); the interaction mediates cell-cell interaction and adhesion.

It localises to the membrane. Its function is as follows. Integrin alpha-IIb/beta-3 is a receptor for fibronectin, fibrinogen, plasminogen, prothrombin, thrombospondin and vitronectin. It recognizes the sequence R-G-D in a wide array of ligands. It recognizes the sequence H-H-L-G-G-G-A-K-Q-A-G-D-V in fibrinogen gamma chain. Following activation integrin alpha-IIb/beta-3 brings about platelet/platelet interaction through binding of soluble fibrinogen. This step leads to rapid platelet aggregation which physically plugs ruptured endothelial cell surface. This chain is Integrin alpha-IIb (ITGA2B), found in Papio cynocephalus (Yellow baboon).